The primary structure comprises 300 residues: Homoserine kinase (300 aa).

82–92 (RPGSGLGSSAA) provides a ligand contact to ATP.

The protein belongs to the GHMP kinase family. Homoserine kinase subfamily.

The protein localises to the cytoplasm. The catalysed reaction is L-homoserine + ATP = O-phospho-L-homoserine + ADP + H(+). It participates in amino-acid biosynthesis; L-threonine biosynthesis; L-threonine from L-aspartate: step 4/5. Functionally, catalyzes the ATP-dependent phosphorylation of L-homoserine to L-homoserine phosphate. In Methanocella arvoryzae (strain DSM 22066 / NBRC 105507 / MRE50), this protein is Homoserine kinase.